Consider the following 362-residue polypeptide: Probable peptidyl-prolyl cis-trans isomerase C27F1.06c (362 aa).

Serine 69 is modified (phosphoserine). Residues 144–274 (DEFSSDEEEM…KVKGDGPAAK (131 aa)) form a disordered region. 2 stretches are compositionally biased toward acidic residues: residues 146–167 (FSSDEEEMDDISVTSSEEEEEE) and 175–189 (LNSDEEDAEQAEEEI). A Phosphoserine modification is found at serine 177. The span at 190-218 (LEKPVPKDEVAEKHSKDKLKKEEKEKKTA) shows a compositional bias: basic and acidic residues. Residues 276 to 362 (KKRVSMRYIG…VFDVKLLAVN (87 aa)) enclose the PPIase FKBP-type domain.

This sequence belongs to the FKBP-type PPIase family. FKBP3/4 subfamily.

It carries out the reaction [protein]-peptidylproline (omega=180) = [protein]-peptidylproline (omega=0). Functionally, PPIases accelerate the folding of proteins. It catalyzes the cis-trans isomerization of proline imidic peptide bonds in oligopeptides. This chain is Probable peptidyl-prolyl cis-trans isomerase C27F1.06c, found in Schizosaccharomyces pombe (strain 972 / ATCC 24843) (Fission yeast).